The chain runs to 190 residues: Nucleoside triphosphate pyrophosphatase (190 aa).

Asp69 (proton acceptor) is an active-site residue.

It belongs to the Maf family. The cofactor is a divalent metal cation.

It localises to the cytoplasm. The enzyme catalyses a ribonucleoside 5'-triphosphate + H2O = a ribonucleoside 5'-phosphate + diphosphate + H(+). It carries out the reaction a 2'-deoxyribonucleoside 5'-triphosphate + H2O = a 2'-deoxyribonucleoside 5'-phosphate + diphosphate + H(+). Nucleoside triphosphate pyrophosphatase. May have a dual role in cell division arrest and in preventing the incorporation of modified nucleotides into cellular nucleic acids. This is Nucleoside triphosphate pyrophosphatase from Helicobacter pylori (strain J99 / ATCC 700824) (Campylobacter pylori J99).